Here is a 132-residue protein sequence, read N- to C-terminus: Small ribosomal subunit protein uS8 (132 aa).

It belongs to the universal ribosomal protein uS8 family. In terms of assembly, part of the 30S ribosomal subunit. Contacts proteins S5 and S12.

Its function is as follows. One of the primary rRNA binding proteins, it binds directly to 16S rRNA central domain where it helps coordinate assembly of the platform of the 30S subunit. The protein is Small ribosomal subunit protein uS8 of Lacticaseibacillus casei (strain BL23) (Lactobacillus casei).